A 761-amino-acid chain; its full sequence is 52 kDa repressor of the inhibitor of the protein kinase (761 aa).

The segment at 1–86 (MPNFCAAPNC…LRDNAIPTIF (86 aa)) adopts a THAP-type zinc-finger fold. Over residues 116–132 (QKKIDETSEQEQKHKET) the composition is skewed to basic and acidic residues. The tract at residues 116 to 149 (QKKIDETSEQEQKHKETNNSNAQNPSEEEGEGQD) is disordered. Serine 566 bears the Phosphoserine mark.

In terms of assembly, interacts with DNAJC3, probably sequestring it.

Its function is as follows. Upstream regulator of interferon-induced serine/threonine protein kinase R (PKR). May block the PKR-inhibitory function of DNAJC3, resulting in restoration of kinase activity and suppression of cell growth. The chain is 52 kDa repressor of the inhibitor of the protein kinase from Homo sapiens (Human).